We begin with the raw amino-acid sequence, 201 residues long: MTAPVIGVLALQGDVREHTAALAAAGADARPVRRPGELDLVDGLVIPGGESTTISRLADVFELREPIDKRIADGMPVYGSCAGMIMLASEVLDGRPDQRAFAGIEMTVRRNAFGRQVHSFEAPVSVAGIDGGPFHVLFIRAPWVERVGQGVEVLGTVTEGPAAGRIVAVRQGNLLATSFHPELTGDRRLHAYFADLVRAAV.

L-glutamine is bound at residue 49-51 (GES). Cysteine 81 functions as the Nucleophile in the catalytic mechanism. Residues arginine 110 and 139–140 (IR) contribute to the L-glutamine site. Active-site charge relay system residues include histidine 180 and glutamate 182.

It belongs to the glutaminase PdxT/SNO family. As to quaternary structure, in the presence of PdxS, forms a dodecamer of heterodimers. Only shows activity in the heterodimer.

It catalyses the reaction aldehydo-D-ribose 5-phosphate + D-glyceraldehyde 3-phosphate + L-glutamine = pyridoxal 5'-phosphate + L-glutamate + phosphate + 3 H2O + H(+). The enzyme catalyses L-glutamine + H2O = L-glutamate + NH4(+). It participates in cofactor biosynthesis; pyridoxal 5'-phosphate biosynthesis. Catalyzes the hydrolysis of glutamine to glutamate and ammonia as part of the biosynthesis of pyridoxal 5'-phosphate. The resulting ammonia molecule is channeled to the active site of PdxS. The chain is Pyridoxal 5'-phosphate synthase subunit PdxT from Salinispora arenicola (strain CNS-205).